The sequence spans 325 residues: Pectinesterase A (325 aa).

The signal sequence occupies residues 1 to 18 (MRVQSYLSLFSLVGAALC). N-linked (GlcNAc...) asparagine glycosylation occurs at N126. Q143 contributes to the substrate binding site. The Proton donor role is filled by D166. The active-site Nucleophile is D187. Substrate is bound by residues R247 and W249.

The protein belongs to the pectinesterase family.

Its subcellular location is the secreted. The catalysed reaction is [(1-&gt;4)-alpha-D-galacturonosyl methyl ester](n) + n H2O = [(1-&gt;4)-alpha-D-galacturonosyl](n) + n methanol + n H(+). It functions in the pathway glycan metabolism; pectin degradation; 2-dehydro-3-deoxy-D-gluconate from pectin: step 1/5. Functionally, involved in maceration and soft-rotting of plant tissue. Active against citrus pectin. The chain is Pectinesterase A (pmeA) from Emericella nidulans (strain FGSC A4 / ATCC 38163 / CBS 112.46 / NRRL 194 / M139) (Aspergillus nidulans).